Here is a 425-residue protein sequence, read N- to C-terminus: Kynureninase (425 aa).

Residues L105, T106, 133 to 136 (FPSD), D218, H221, and Y243 each bind pyridoxal 5'-phosphate. K244 carries the N6-(pyridoxal phosphate)lysine modification. Residues W274 and N302 each coordinate pyridoxal 5'-phosphate.

It belongs to the kynureninase family. As to quaternary structure, homodimer. Requires pyridoxal 5'-phosphate as cofactor.

The enzyme catalyses L-kynurenine + H2O = anthranilate + L-alanine + H(+). It catalyses the reaction 3-hydroxy-L-kynurenine + H2O = 3-hydroxyanthranilate + L-alanine + H(+). Its pathway is amino-acid degradation; L-kynurenine degradation; L-alanine and anthranilate from L-kynurenine: step 1/1. It functions in the pathway cofactor biosynthesis; NAD(+) biosynthesis; quinolinate from L-kynurenine: step 2/3. Catalyzes the cleavage of L-kynurenine (L-Kyn) and L-3-hydroxykynurenine (L-3OHKyn) into anthranilic acid (AA) and 3-hydroxyanthranilic acid (3-OHAA), respectively. This is Kynureninase from Flavobacterium psychrophilum (strain ATCC 49511 / DSM 21280 / CIP 103535 / JIP02/86).